Reading from the N-terminus, the 297-residue chain is CASP-like protein 2U8 (297 aa).

At 1-10 (MLELYEKRRA) the chain is on the cytoplasmic side. A helical transmembrane segment spans residues 11-31 (LLLLRLAAMFLSLAALLITVL). The Extracellular portion of the chain corresponds to 32-64 (NREDGFFSINVFGSPQPILAKATADFTLVKGLK). The chain crosses the membrane as a helical span at residues 65–85 (FFAGAMGIVAGYSFLQLAIAM). Residues 86 to 101 (ASIFSGAPSILGGKRM) are Cytoplasmic-facing. A helical membrane pass occupies residues 102 to 122 (AWLCFVGDMTASHLCAAAAAV). Residues 123-148 (SAQLAYLGKRGAPMWSAVCTYFSHYC) are Extracellular-facing. The chain crosses the membrane as a helical span at residues 149–169 (LVFGLAVILAFLATLAALLVA). Residues 170-297 (SISSYHLAYD…RVLEMETPCK (128 aa)) are Cytoplasmic-facing.

This sequence belongs to the Casparian strip membrane proteins (CASP) family. As to quaternary structure, homodimer and heterodimers.

The protein localises to the cell membrane. This is CASP-like protein 2U8 from Selaginella moellendorffii (Spikemoss).